The sequence spans 356 residues: Nicotinate-nucleotide--dimethylbenzimidazole phosphoribosyltransferase (356 aa).

The Proton acceptor role is filled by Glu-317.

This sequence belongs to the CobT family. As to quaternary structure, homodimer.

The catalysed reaction is 5,6-dimethylbenzimidazole + nicotinate beta-D-ribonucleotide = alpha-ribazole 5'-phosphate + nicotinate + H(+). It participates in nucleoside biosynthesis; alpha-ribazole biosynthesis; alpha-ribazole from 5,6-dimethylbenzimidazole: step 1/2. Functionally, catalyzes the synthesis of alpha-ribazole-5'-phosphate from nicotinate mononucleotide (NAMN) and 5,6-dimethylbenzimidazole (DMB). The polypeptide is Nicotinate-nucleotide--dimethylbenzimidazole phosphoribosyltransferase (Salmonella paratyphi A (strain AKU_12601)).